The chain runs to 178 residues: Large ribosomal subunit protein uL6 (178 aa).

The protein belongs to the universal ribosomal protein uL6 family. As to quaternary structure, part of the 50S ribosomal subunit.

In terms of biological role, this protein binds to the 23S rRNA, and is important in its secondary structure. It is located near the subunit interface in the base of the L7/L12 stalk, and near the tRNA binding site of the peptidyltransferase center. The sequence is that of Large ribosomal subunit protein uL6 from Streptococcus suis (strain 05ZYH33).